The following is a 428-amino-acid chain: 3-phosphoshikimate 1-carboxyvinyltransferase (428 aa).

Lys23, Ser24, and Arg28 together coordinate 3-phosphoshikimate. Position 23 (Lys23) interacts with phosphoenolpyruvate. Gly97 and Arg125 together coordinate phosphoenolpyruvate. Ser170, Ser171, Gln172, Ser198, Asp314, Asn337, and Lys341 together coordinate 3-phosphoshikimate. Gln172 contacts phosphoenolpyruvate. The active-site Proton acceptor is the Asp314. Phosphoenolpyruvate is bound by residues Arg345, Arg387, and Lys412.

This sequence belongs to the EPSP synthase family. As to quaternary structure, monomer.

Its subcellular location is the cytoplasm. It carries out the reaction 3-phosphoshikimate + phosphoenolpyruvate = 5-O-(1-carboxyvinyl)-3-phosphoshikimate + phosphate. The protein operates within metabolic intermediate biosynthesis; chorismate biosynthesis; chorismate from D-erythrose 4-phosphate and phosphoenolpyruvate: step 6/7. Functionally, catalyzes the transfer of the enolpyruvyl moiety of phosphoenolpyruvate (PEP) to the 5-hydroxyl of shikimate-3-phosphate (S3P) to produce enolpyruvyl shikimate-3-phosphate and inorganic phosphate. The polypeptide is 3-phosphoshikimate 1-carboxyvinyltransferase (Edwardsiella ictaluri (strain 93-146)).